Here is a 252-residue protein sequence, read N- to C-terminus: Small ribosomal subunit protein eS4 (252 aa).

An S4 RNA-binding domain is found at F43–V105.

The protein belongs to the eukaryotic ribosomal protein eS4 family.

The polypeptide is Small ribosomal subunit protein eS4 (Staphylothermus marinus (strain ATCC 43588 / DSM 3639 / JCM 9404 / F1)).